The primary structure comprises 156 residues: Small ribosomal subunit protein uS7 (156 aa).

Belongs to the universal ribosomal protein uS7 family. As to quaternary structure, part of the 30S ribosomal subunit. Contacts proteins S9 and S11.

Functionally, one of the primary rRNA binding proteins, it binds directly to 16S rRNA where it nucleates assembly of the head domain of the 30S subunit. Is located at the subunit interface close to the decoding center, probably blocks exit of the E-site tRNA. In Nocardioides sp. (strain ATCC BAA-499 / JS614), this protein is Small ribosomal subunit protein uS7.